The following is a 133-amino-acid chain: Major seminal plasma glycoprotein PSP-I (133 aa).

Residues 1 to 24 (MKLGSAIPWALLFSTATLISTGWG) form the signal peptide. A disulfide bond links Cys30 and Cys51. The CUB domain occupies 30–130 (CGGRLTDDYG…SPYEIIFLRD (101 aa)). Asn71 carries N-linked (GlcNAc...) (complex) asparagine glycosylation. A disulfide bridge connects residues Cys74 and Cys95.

In terms of assembly, monomer or heterodimer with PSP-II (depending on the type of glycosylation of PSP-I). Seminal plasma or sperm.

It is found in the secreted. Its function is as follows. Not yet identified, major porcine seminal plasma protein. Can bind soybean trypsin inhibitor after deglycosylation. This Sus scrofa (Pig) protein is Major seminal plasma glycoprotein PSP-I.